The sequence spans 615 residues: 1-deoxy-D-xylulose-5-phosphate synthase (615 aa).

Residues His-77 and 118–120 each bind thiamine diphosphate; that span reads GHS. A Mg(2+)-binding site is contributed by Asp-149. Thiamine diphosphate contacts are provided by residues 150 to 151, Asn-178, Tyr-286, and Glu-367; that span reads GA. Asn-178 is a Mg(2+) binding site.

This sequence belongs to the transketolase family. DXPS subfamily. As to quaternary structure, homodimer. Mg(2+) serves as cofactor. Thiamine diphosphate is required as a cofactor.

The catalysed reaction is D-glyceraldehyde 3-phosphate + pyruvate + H(+) = 1-deoxy-D-xylulose 5-phosphate + CO2. Its pathway is metabolic intermediate biosynthesis; 1-deoxy-D-xylulose 5-phosphate biosynthesis; 1-deoxy-D-xylulose 5-phosphate from D-glyceraldehyde 3-phosphate and pyruvate: step 1/1. In terms of biological role, catalyzes the acyloin condensation reaction between C atoms 2 and 3 of pyruvate and glyceraldehyde 3-phosphate to yield 1-deoxy-D-xylulose-5-phosphate (DXP). In Glaesserella parasuis serovar 5 (strain SH0165) (Haemophilus parasuis), this protein is 1-deoxy-D-xylulose-5-phosphate synthase.